The chain runs to 220 residues: MDDFRKYATKHLGMNAMVLDDVIKSQAGYLNPYILEERQLNVTQLDVFSRLMMDRIIFLGTQIDDYTANTLQAQLLYLDSVDPGKDISIYINSPGGSVYAGLGIYDTMQFISSDVATICTGMAASMASVLLVAGAKGKRSALPHSRVMIHQPMGGAQGQASDIEITAREIQKLKKELYTIIADHSGTSFDKVWADSDRDYWMTAQEAKEYGMIDEVLIKK.

Serine 125 acts as the Nucleophile in catalysis. The active site involves histidine 150.

It belongs to the peptidase S14 family. Fourteen ClpP subunits assemble into 2 heptameric rings which stack back to back to give a disk-like structure with a central cavity, resembling the structure of eukaryotic proteasomes.

It is found in the cytoplasm. The enzyme catalyses Hydrolysis of proteins to small peptides in the presence of ATP and magnesium. alpha-casein is the usual test substrate. In the absence of ATP, only oligopeptides shorter than five residues are hydrolyzed (such as succinyl-Leu-Tyr-|-NHMec, and Leu-Tyr-Leu-|-Tyr-Trp, in which cleavage of the -Tyr-|-Leu- and -Tyr-|-Trp bonds also occurs).. Cleaves peptides in various proteins in a process that requires ATP hydrolysis. Has a chymotrypsin-like activity. Plays a major role in the degradation of misfolded proteins. The chain is ATP-dependent Clp protease proteolytic subunit from Bacteroides fragilis (strain YCH46).